The primary structure comprises 967 residues: Kinesin-like protein KIF28P (967 aa).

In terms of domain architecture, Kinesin motor spans 7-355 (DSVKAVRVRP…LRYAERERKI (349 aa)). 111–118 (GQTGSGKS) contacts ATP. The FHA domain occupies 410–472 (APCPRPALSP…LQHLDRLILG (63 aa)). Residues 822–851 (NQIPELYLKLLKLEQETEPLRNINRALREE) adopt a coiled-coil conformation.

It belongs to the TRAFAC class myosin-kinesin ATPase superfamily. Kinesin family.

The protein resides in the mitochondrion membrane. Its function is as follows. Microtubule-dependent motor protein required for mitochondrion morphology and transport of mitochondria in neuronal cells. The chain is Kinesin-like protein KIF28P (KIF28P) from Homo sapiens (Human).